A 140-amino-acid polypeptide reads, in one-letter code: Small ribosomal subunit protein uS12m (140 aa).

It belongs to the universal ribosomal protein uS12 family.

It localises to the mitochondrion. The polypeptide is Small ribosomal subunit protein uS12m (mrps12) (Dictyostelium discoideum (Social amoeba)).